Here is a 561-residue protein sequence, read N- to C-terminus: MAEAVWSTDTGEAVYRSRDPVRNLRLRVHLQRITSSNFLHYQPAAQMGKDLIDLATFRPPQAASGHRPDEEEEEEVVIGWQEKLFSQFEVDLYQNESACQSPLDHQYRQEILKLENSGGRKNRRIFTYTDSDRYTDLEEYCQKITTSASEVPSFLAERMANVRRRRQDRRGVEGSKLKSRIVTWEPSEDFIKNNHAINTPLQTMYIMADLGPYGKLGYKVHEHVLCILKVDSNGVITVKPDFTGIKGPYRIETEGEKQEHTSAWKYTIDNVSSLAQPEEEEREQRVFKDLYGRHKEYLSSLVGTDFEMIAPGALRLFVNGEVVSAQGYEYDNLYVHFFVELPAANWSSPPFQQLSGVTQACATKSLGMDKVAYFSFPFTFEAFFLHEDESAESLPEWPVLYCKVLSLDFWQRYRVEGYGAVVLPATPGSHTLTVSTWRPMELGLVAELRRFFIGGSLELEDPSYVRIPGTFKGERLSRFGFRTETTGTVTFRLHCLQQSRAFMESNSLQKQMRSVLDRLEGFSQQSSTHNVLEAFRRARRRMQEARESLPQDLVSPTGTLT.

Positions 314–442 (LRLFVNGEVV…TVSTWRPMEL (129 aa)) constitute a C2 B9-type domain.

Part of the tectonic-like complex (also named B9 complex). Interacts with TMEM107. Interacts with TCTN3, AHI1, TCTN1, TCTN2, CC2D2A. Interacts with FLNA. Interacts with TMEM67. Interacts with B9D1 and B9D2. In terms of tissue distribution, widely expressed in embryo at 15.5 dpc, with a relatively strong expression in brain, liver, kidney and digits of the upper limbs. Highly expressed in bronchiolar epithelium.

It is found in the cytoplasm. The protein resides in the cytoskeleton. The protein localises to the cilium basal body. It localises to the microtubule organizing center. Its subcellular location is the centrosome. Its function is as follows. Component of the tectonic-like complex, a complex localized at the transition zone of primary cilia and acting as a barrier that prevents diffusion of transmembrane proteins between the cilia and plasma membranes. Involved in centrosome migration to the apical cell surface during early ciliogenesis. Required for ciliary structure and function, including a role in regulating length and appropriate number through modulating centrosome duplication. Required for cell branching morphology. In Mus musculus (Mouse), this protein is Tectonic-like complex member MKS1 (Mks1).